The sequence spans 819 residues: Sulfate permease 2 (819 aa).

Asparagine 24 is a glycosylation site (N-linked (GlcNAc...) asparagine). 10 helical membrane passes run tyrosine 72–valine 92, leucine 104–alanine 124, isoleucine 129–glutamine 149, leucine 172–isoleucine 192, alanine 194–isoleucine 214, phenylalanine 273–leucine 293, isoleucine 328–isoleucine 348, serine 365–proline 385, phenylalanine 454–phenylalanine 474, and isoleucine 477–alanine 497. The region spanning glutamate 551 to valine 708 is the STAS domain. Asparagine 581 carries N-linked (GlcNAc...) asparagine glycosylation. A disordered region spans residues glutamate 726–threonine 766. Over residues glutamate 746–glutamate 755 the composition is skewed to gly residues.

Belongs to the SLC26A/SulP transporter (TC 2.A.53) family. As to expression, mainly found in mycelia.

The protein resides in the membrane. In terms of biological role, uptake of sulfate into the cell. The protein is Sulfate permease 2 (cys-14) of Neurospora crassa (strain ATCC 24698 / 74-OR23-1A / CBS 708.71 / DSM 1257 / FGSC 987).